The sequence spans 258 residues: Spindlin-2A (258 aa).

Over residues 1–23 the composition is skewed to low complexity; that stretch reads MKTPNAQEAEGQQTRAAAGRATG. The tract at residues 1–49 is disordered; it reads MKTPNAQEAEGQQTRAAAGRATGSANMTKKKVSQKKQRGRPSSQPRRNI. A compositionally biased stretch (basic residues) spans 28–39; the sequence is TKKKVSQKKQRG. Tudor-like domain stretches follow at residues 50 to 99, 129 to 178, and 210 to 255; these read VGCR…LELH, IGKA…YQLL, and IGKH…YDLV. Histone H3K4me3 and H3R8me2a binding regions lie at residues Glu138 and 246–248; that span reads DFH.

It belongs to the SPIN/STSY family. As to quaternary structure, interacts with C11orf84/SPINDOC.

Its subcellular location is the nucleus. In terms of biological role, may be involved in the regulation of cell cycle progression. Exhibits H3K4me3-binding activity. The protein is Spindlin-2A (SPIN2A) of Homo sapiens (Human).